The following is a 254-amino-acid chain: Ribosomal RNA small subunit methyltransferase J (254 aa).

Residues 101-102 (RD), 117-118 (ER), 153-154 (SS), and D171 contribute to the S-adenosyl-L-methionine site.

This sequence belongs to the methyltransferase superfamily. RsmJ family.

The protein localises to the cytoplasm. It carries out the reaction guanosine(1516) in 16S rRNA + S-adenosyl-L-methionine = N(2)-methylguanosine(1516) in 16S rRNA + S-adenosyl-L-homocysteine + H(+). Its function is as follows. Specifically methylates the guanosine in position 1516 of 16S rRNA. The protein is Ribosomal RNA small subunit methyltransferase J of Enterobacter sp. (strain 638).